A 348-amino-acid polypeptide reads, in one-letter code: Protein arginine N-methyltransferase 1 (348 aa).

Residues 20–322 (EQHYFNSYDH…EKNNRDLNIK (303 aa)) enclose the SAM-dependent MTase PRMT-type domain. 5 residues coordinate S-adenosyl-L-methionine: histidine 33, arginine 42, glycine 66, aspartate 88, and glutamate 117. Catalysis depends on residues glutamate 132 and glutamate 141.

Belongs to the class I-like SAM-binding methyltransferase superfamily. Protein arginine N-methyltransferase family. In terms of assembly, homodimer. The dimers can then associate to form a ring-shaped homohexamer. Interacts with NPL3, BRE5, MTR4, SNF2, SUM1, and SSD1.

The protein localises to the nucleus. The catalysed reaction is L-arginyl-[protein] + S-adenosyl-L-methionine = N(omega)-methyl-L-arginyl-[protein] + S-adenosyl-L-homocysteine + H(+). It catalyses the reaction L-arginyl-[protein] + 2 S-adenosyl-L-methionine = N(omega),N(omega)-dimethyl-L-arginyl-[protein] + 2 S-adenosyl-L-homocysteine + 2 H(+). Functionally, S-adenosyl-L-methionine-dependent protein-arginine N-methyltransferase that catalyzes both the mono- and asymmetric (type I) dimethylation of the guanidino nitrogens of arginine residues in a variety of RNA-binding proteins such as heterogeneous nuclear ribonucleoproteins (hnRNPs) and small nuclear ribonucleoproteins (snRNPs). Methylates NAB2, NPL3, HRP1 and YRA1, shuttling hnRNPs involved in mRNA processing and export, facilitating their export out of the nucleus. Methylation of NPL3 weakens its interaction with THO2, a component of the TREX (transcription/export) complex important for transcriptional elongation and recruitment of mRNA export factors. Methylates the hnRNP HRB1, but does not influence its subcellular location. Methylates the nucleolar proteins GAR1, NOP1 and NSR1. Methylates the snRNP SNP1 and modulates the cotranscriptional recruitment of splicing factors. Dimethylates free histone H4 (HHF1/HHF2) at 'Arg-4' (H4R3me2a) and plays a role in preservation and establishment of silent chromatin domains. Mono- and dimethylates ribosomal protein S2 (RPS2) at 'Arg-11'. Methylates the catalytic subunit of the SWI/SNF chromatin-remodeling complex SNF2. The polypeptide is Protein arginine N-methyltransferase 1 (Saccharomyces cerevisiae (strain ATCC 204508 / S288c) (Baker's yeast)).